Here is a 1225-residue protein sequence, read N- to C-terminus: uncharacterized protein (1225 aa).

Positions 1–15 are enriched in polar residues; the sequence is MSSQAEPSKGASNAD. A disordered region spans residues 1–104; sequence MSSQAEPSKG…VDGVPTRPVS (104 aa). Over residues 16 to 25 the composition is skewed to basic and acidic residues; the sequence is PNEKVEKMHL. Residues 43–65 show a composition bias toward polar residues; sequence ASPSDKNNLNPQSAGVSEVQVQD. The helical transmembrane segment at 167-187 threads the bilayer; that stretch reads FLFGYLRFGFLSLFIIMAVCI. The SMP-LTD domain occupies 217–422; sequence DSETVTWLNT…SPNVYELDIE (206 aa). 3 C2 domains span residues 413-534, 559-668, and 685-803; these read SPNV…NDAF, DSGE…LLWF, and KPAQ…GALM. Ser-843 is modified (phosphoserine). Residues 867-890 form a disordered region; sequence PESQKTPTAVDNTSTSRGSTSVKT. Residues 869-890 are compositionally biased toward polar residues; sequence SQKTPTAVDNTSTSRGSTSVKT. The C2 4 domain maps to 1019-1137; that stretch reads RLTPVPVKLE…QQQQQTNYEI (119 aa). 5 residues coordinate Ca(2+): Asp-1053, Asp-1059, Asp-1107, Asp-1109, and Asp-1115.

The cofactor is Ca(2+).

It localises to the endoplasmic reticulum membrane. This is an uncharacterized protein from Schizosaccharomyces pombe (strain 972 / ATCC 24843) (Fission yeast).